A 122-amino-acid polypeptide reads, in one-letter code: Phospholipase A2 nigroviriditoxin basic subunit B (122 aa).

7 cysteine pairs are disulfide-bonded: cysteine 26–cysteine 115, cysteine 28–cysteine 44, cysteine 43–cysteine 95, cysteine 49–cysteine 122, cysteine 50–cysteine 88, cysteine 57–cysteine 81, and cysteine 75–cysteine 86. Tyrosine 27, glycine 29, and glycine 31 together coordinate Ca(2+). Residue histidine 47 is part of the active site. Residue aspartate 48 coordinates Ca(2+). Aspartate 89 is an active-site residue.

The protein belongs to the phospholipase A2 family. Group II subfamily. D49 sub-subfamily. In terms of assembly, nigroviriditoxin is a heterodimer of an acidic subunit A and a basic subunit B. It depends on Ca(2+) as a cofactor. In terms of tissue distribution, expressed by the venom gland.

The protein resides in the secreted. It catalyses the reaction a 1,2-diacyl-sn-glycero-3-phosphocholine + H2O = a 1-acyl-sn-glycero-3-phosphocholine + a fatty acid + H(+). Heterodimer A-B: Nigroviriditoxin possesses phospholipase A2 (PLA2) activity. It consists of a non-covalent association of a basic PLA2 subunit B with a non-enzymatic subunit A. Functionally, subunit B: Snake venom phospholipase A2 (PLA2) that induces myonecrosis in mice. PLA2 catalyzes the calcium-dependent hydrolysis of the 2-acyl groups in 3-sn-phosphoglycerides. This chain is Phospholipase A2 nigroviriditoxin basic subunit B, found in Bothriechis nigroviridis (Black-speckled palm pit viper).